Reading from the N-terminus, the 435-residue chain is Zinc finger CCCH domain-containing protein 67 (435 aa).

The disordered stretch occupies residues 1–91 (MSKPEETSDP…DQKEEEEGSE (91 aa)). 3 consecutive C3H1-type zinc fingers follow at residues 101-129 (RPDS…HPVR), 148-176 (NPKL…HMKE), and 194-222 (RPGE…HPDP). The disordered stretch occupies residues 235–274 (GNNGGSFSPKAPSQASSTSWSSTRHMNGTGTAPFIPSMFP). Positions 247–256 (SQASSTSWSS) are enriched in low complexity. 2 C3H1-type zinc fingers span residues 334-362 (RPDQ…HPKN) and 380-408 (RPDQ…HSIP). The segment at 412–435 (SPSSSQTVEARQVGANGNEDDSWH) is disordered.

Its subcellular location is the nucleus. The polypeptide is Zinc finger CCCH domain-containing protein 67 (Arabidopsis thaliana (Mouse-ear cress)).